The primary structure comprises 181 residues: Peptidyl-tRNA hydrolase (181 aa).

A tRNA-binding site is contributed by tyrosine 14. Catalysis depends on histidine 19, which acts as the Proton acceptor. Positions 60, 62, and 106 each coordinate tRNA.

Belongs to the PTH family. As to quaternary structure, monomer.

The protein localises to the cytoplasm. It catalyses the reaction an N-acyl-L-alpha-aminoacyl-tRNA + H2O = an N-acyl-L-amino acid + a tRNA + H(+). In terms of biological role, hydrolyzes ribosome-free peptidyl-tRNAs (with 1 or more amino acids incorporated), which drop off the ribosome during protein synthesis, or as a result of ribosome stalling. Catalyzes the release of premature peptidyl moieties from peptidyl-tRNA molecules trapped in stalled 50S ribosomal subunits, and thus maintains levels of free tRNAs and 50S ribosomes. This Campylobacter curvus (strain 525.92) protein is Peptidyl-tRNA hydrolase.